The primary structure comprises 502 residues: ATP synthase subunit alpha (502 aa).

ATP is bound at residue 169–176 (GDRQTGKT).

This sequence belongs to the ATPase alpha/beta chains family. In terms of assembly, F-type ATPases have 2 components, CF(1) - the catalytic core - and CF(0) - the membrane proton channel. CF(1) has five subunits: alpha(3), beta(3), gamma(1), delta(1), epsilon(1). CF(0) has three main subunits: a(1), b(2) and c(9-12). The alpha and beta chains form an alternating ring which encloses part of the gamma chain. CF(1) is attached to CF(0) by a central stalk formed by the gamma and epsilon chains, while a peripheral stalk is formed by the delta and b chains.

It localises to the cell membrane. The catalysed reaction is ATP + H2O + 4 H(+)(in) = ADP + phosphate + 5 H(+)(out). Produces ATP from ADP in the presence of a proton gradient across the membrane. The alpha chain is a regulatory subunit. In Clostridium perfringens (strain SM101 / Type A), this protein is ATP synthase subunit alpha.